Reading from the N-terminus, the 596-residue chain is Nuclear receptor subfamily 2 group C member 2 (596 aa).

Ser-19 carries the phosphoserine; by MAPK modification. Ser-46 is subject to Phosphoserine. Ser-55 and Ser-68 each carry phosphoserine; by MAPK. At Ser-98 the chain carries Phosphoserine. Positions 114–189 (VEYCVVCGDK…MGMKMESVQS (76 aa)) form a DNA-binding region, nuclear receptor. NR C4-type zinc fingers lie at residues 117–137 (CVVCGDKASGRHYGAVSCEGC) and 153–177 (CRSSQDCIINKHHRNRCQFCRLKKC). Lys-192 is covalently cross-linked (Glycyl lysine isopeptide (Lys-Gly) (interchain with G-Cter in SUMO2)). Residue Ser-219 is modified to Phosphoserine. The residue at position 231 (Lys-231) is an N6-acetyllysine. Positions 341-583 (GSIHVISRDQ…SIIPYILKME (243 aa)) constitute an NR LBD domain.

It belongs to the nuclear hormone receptor family. NR2 subfamily. As to quaternary structure, homodimer; can bind DNA as homodimer. Heterodimer; binds DNA as a heterodimer with NR2C1 required for chromatin remodeling and for binding to promoter regions such as globin DR1 repeats. Interacts with NR2C2AP; the interaction represses selective NR2C2-mediated transcriptional activity. Interacts with PCAF; the interaction preferentially occurs on the non-phosphorylated form and induces NR2C2-mediated transactivation activity and does not require the ligand-binding domain. Interacts (MAPK-mediated phosphorylated form) with NRIP1; the interaction promotes repression of NR2C2-mediated activity. Interacts with NLRP10. Interacts (via ligand-binding region) with transcriptional corepressor JAZF1; the interaction promotes NR2C2-mediated transcriptional repression. Phosphorylation on Ser-19 and Ser-68 is an important regulator of NR2C2-mediated transcriptional activity. Phosphorylation on these residues recruits the corepressor, NRIP1, leading to transcripional repression, whereas the non-phosphorylated form preferentially recruits the coactivator, PCAF. In terms of tissue distribution, expressed, during embryogenesis, in perichondrium, developing glomeruli structures and tubules of kidney, as well as in intestiinal villi. Also expressed in lung and hair follicles.

It localises to the nucleus. Orphan nuclear receptor that can act as a repressor or activator of transcription. An important repressor of nuclear receptor signaling pathways such as retinoic acid receptor, retinoid X, vitamin D3 receptor, thyroid hormone receptor and estrogen receptor pathways. May regulate gene expression during the late phase of spermatogenesis. Activates transcriptional activity of LHCG and is antagonist of PPARA-mediated transactivation. Together with NR2C1, forms the core of the DRED (direct repeat erythroid-definitive) complex that represses embryonic and fetal globin transcription including that of GATA1. Binds to hormone response elements (HREs) consisting of two 5'-AGGTCA-3' half site direct repeat consensus sequences. Plays a fundamental role in early embryonic development and embryonic stem cells. Required for normal spermatogenesis and cerebellum development. Appears to be important for neurodevelopmentally regulated behavior. In Mus musculus (Mouse), this protein is Nuclear receptor subfamily 2 group C member 2 (Nr2c2).